Consider the following 239-residue polypeptide: Peptidyl-tRNA hydrolase (239 aa).

Y14 contacts tRNA. The active-site Proton acceptor is the H19. TRNA-binding residues include F64, N66, and N112.

This sequence belongs to the PTH family. Monomer.

It is found in the cytoplasm. The enzyme catalyses an N-acyl-L-alpha-aminoacyl-tRNA + H2O = an N-acyl-L-amino acid + a tRNA + H(+). In terms of biological role, hydrolyzes ribosome-free peptidyl-tRNAs (with 1 or more amino acids incorporated), which drop off the ribosome during protein synthesis, or as a result of ribosome stalling. Functionally, catalyzes the release of premature peptidyl moieties from peptidyl-tRNA molecules trapped in stalled 50S ribosomal subunits, and thus maintains levels of free tRNAs and 50S ribosomes. The sequence is that of Peptidyl-tRNA hydrolase from Rhizobium meliloti (strain 1021) (Ensifer meliloti).